The primary structure comprises 119 residues: Large ribosomal subunit protein bL20 (119 aa).

The protein belongs to the bacterial ribosomal protein bL20 family.

Functionally, binds directly to 23S ribosomal RNA and is necessary for the in vitro assembly process of the 50S ribosomal subunit. It is not involved in the protein synthesizing functions of that subunit. In Stenotrophomonas maltophilia (strain K279a), this protein is Large ribosomal subunit protein bL20.